A 482-amino-acid polypeptide reads, in one-letter code: GTPase Der (482 aa).

EngA-type G domains follow at residues 3-166 (PVVA…SEQF) and 195-368 (IKLA…NSAT). GTP-binding positions include 9 to 16 (GRPNVGKS), 56 to 60 (DTGGI), 118 to 121 (NKVD), 201 to 208 (GKPNVGKS), 248 to 252 (DTAGV), and 313 to 316 (NKWD). The KH-like domain maps to 369–453 (KRINTSMLTR…PIKVEFREGA (85 aa)).

Belongs to the TRAFAC class TrmE-Era-EngA-EngB-Septin-like GTPase superfamily. EngA (Der) GTPase family. As to quaternary structure, associates with the 50S ribosomal subunit.

Its function is as follows. GTPase that plays an essential role in the late steps of ribosome biogenesis. The chain is GTPase Der from Pseudoalteromonas atlantica (strain T6c / ATCC BAA-1087).